Consider the following 379-residue polypeptide: Chaperone protein DnaJ (379 aa).

In terms of domain architecture, J spans 5–70; it reads DYYELLEVSR…QKRAAYDQFG (66 aa). The CR-type zinc-finger motif lies at 135-213; it reads GKEVEITVPR…CHGQGRVRES (79 aa). Positions 148, 151, 165, 168, 187, 190, 201, and 204 each coordinate Zn(2+). CXXCXGXG motif repeat units follow at residues 148-155, 165-172, 187-194, and 201-208; these read CTVCEGSG, CETCQGMG, CPTCHGEG, and CASCHGQG.

It belongs to the DnaJ family. As to quaternary structure, homodimer. The cofactor is Zn(2+).

The protein resides in the cytoplasm. Functionally, participates actively in the response to hyperosmotic and heat shock by preventing the aggregation of stress-denatured proteins and by disaggregating proteins, also in an autonomous, DnaK-independent fashion. Unfolded proteins bind initially to DnaJ; upon interaction with the DnaJ-bound protein, DnaK hydrolyzes its bound ATP, resulting in the formation of a stable complex. GrpE releases ADP from DnaK; ATP binding to DnaK triggers the release of the substrate protein, thus completing the reaction cycle. Several rounds of ATP-dependent interactions between DnaJ, DnaK and GrpE are required for fully efficient folding. Also involved, together with DnaK and GrpE, in the DNA replication of plasmids through activation of initiation proteins. This is Chaperone protein DnaJ from Legionella pneumophila (strain Lens).